Here is a 336-residue protein sequence, read N- to C-terminus: Fimbrial adhesin PapGII (336 aa).

A signal peptide spans 1–20; the sequence is MKKWFPALLFSLCVSGESSA. 2 disulfides stabilise this stretch: C64–C138 and C217–C249. Residues E79 and 124 to 127 contribute to the D-galactose site; that span reads GYKW.

Belongs to the adhesin PapG family.

The protein localises to the secreted. It is found in the fimbrium. Functionally, tip adhesin component of type P pili that plays a critical role in kidney infection through targeted interaction with the globoseries glycolipids containing the Gal-alpha(1-4)-Gal disaccharide present on uroepithelial cells. In turn, transcriptionally regulates host gene expression in kidney cells, leading to inflammatory pathway activation and renal tissue damage. Acts thereby as key determinant of invasive uropathogenic E.coli (UPEC), which cause pyelonephritis and urinary-source bacteremia. This is Fimbrial adhesin PapGII from Escherichia coli O6:H1 (strain CFT073 / ATCC 700928 / UPEC).